A 254-amino-acid polypeptide reads, in one-letter code: UPF0246 protein FTF1693c (254 aa).

This sequence belongs to the UPF0246 family.

In Francisella tularensis subsp. tularensis (strain FSC 198), this protein is UPF0246 protein FTF1693c.